The following is a 513-amino-acid chain: Butyrophilin subfamily 3 member A1 (513 aa).

The N-terminal stretch at 1–29 (MKMASFLAFLLLNFRVCLLLLQLLMPHSA) is a signal peptide. Ig-like V-type domains are found at residues 30–139 (QFSV…KALV) and 145–236 (ALGS…ASIS). The Extracellular portion of the chain corresponds to 30-254 (QFSVLGPSGP…AQRWIAALAG (225 aa)). 2 disulfides stabilise this stretch: Cys52–Cys126 and Cys166–Cys220. A glycan (N-linked (GlcNAc...) asparagine) is linked at Asn115. The helical transmembrane segment at 255-271 (TLPVLLLLLGGAGYFLW) threads the bilayer. Residues 272–513 (QQQEEKKTQF…EPTALTICPA (242 aa)) are Cytoplasmic-facing. Residues 322 to 513 (RGERHSAYNE…EPTALTICPA (192 aa)) form the B30.2/SPRY domain.

Belongs to the immunoglobulin superfamily. BTN/MOG family. In terms of assembly, homodimer. Post-translationally, N-glycosylated. As to expression, detected on T-cells, natural killer cells, dendritic cells and macrophages (at protein level). Ubiquitous. Highly expressed in heart, pancreas and lung, Moderately expressed in placenta, liver and muscle.

Its subcellular location is the cell membrane. In terms of biological role, plays a role in T-cell activation and in the adaptive immune response. Regulates the proliferation of activated T-cells. Regulates the release of cytokines and IFNG by activated T-cells. Mediates the response of T-cells toward infected and transformed cells that are characterized by high levels of phosphorylated metabolites, such as isopentenyl pyrophosphate. The protein is Butyrophilin subfamily 3 member A1 (BTN3A1) of Homo sapiens (Human).